A 475-amino-acid chain; its full sequence is Bifunctional protein HldE (475 aa).

Residues 1–320 (MNSSYLNFKD…AIMFQRSHNT (320 aa)) form a ribokinase region. ATP is bound at residue 196–199 (NLLE). Residue Asp265 is part of the active site. The tract at residues 346–475 (FTNGCFDILH…TTSIIEKANL (130 aa)) is cytidylyltransferase.

This sequence in the N-terminal section; belongs to the carbohydrate kinase PfkB family. It in the C-terminal section; belongs to the cytidylyltransferase family. In terms of assembly, homodimer.

It carries out the reaction D-glycero-beta-D-manno-heptose 7-phosphate + ATP = D-glycero-beta-D-manno-heptose 1,7-bisphosphate + ADP + H(+). The catalysed reaction is D-glycero-beta-D-manno-heptose 1-phosphate + ATP + H(+) = ADP-D-glycero-beta-D-manno-heptose + diphosphate. The protein operates within nucleotide-sugar biosynthesis; ADP-L-glycero-beta-D-manno-heptose biosynthesis; ADP-L-glycero-beta-D-manno-heptose from D-glycero-beta-D-manno-heptose 7-phosphate: step 1/4. It functions in the pathway nucleotide-sugar biosynthesis; ADP-L-glycero-beta-D-manno-heptose biosynthesis; ADP-L-glycero-beta-D-manno-heptose from D-glycero-beta-D-manno-heptose 7-phosphate: step 3/4. Functionally, catalyzes the phosphorylation of D-glycero-D-manno-heptose 7-phosphate at the C-1 position to selectively form D-glycero-beta-D-manno-heptose-1,7-bisphosphate. Its function is as follows. Catalyzes the ADP transfer from ATP to D-glycero-beta-D-manno-heptose 1-phosphate, yielding ADP-D-glycero-beta-D-manno-heptose. The polypeptide is Bifunctional protein HldE (Marinomonas sp. (strain MWYL1)).